We begin with the raw amino-acid sequence, 356 residues long: Tyrosine recombinase XerS (356 aa).

The Core-binding (CB) domain maps to 16 to 121; the sequence is IMPWYVLEYY…ALSSLYKYLT (106 aa). Positions 169–354 constitute a Tyr recombinase domain; the sequence is GFLTYIDQEY…VNDEQKNALD (186 aa). Active-site residues include arginine 210, lysine 234, histidine 306, arginine 309, and histidine 332. Tyrosine 341 acts as the O-(3'-phospho-DNA)-tyrosine intermediate in catalysis.

It belongs to the 'phage' integrase family. XerS subfamily.

It is found in the cytoplasm. FtsK is required for recombination. In terms of biological role, site-specific tyrosine recombinase, which acts by catalyzing the cutting and rejoining of the recombining DNA molecules. Essential to convert dimers of the bacterial chromosome into monomers to permit their segregation at cell division. This Streptococcus pneumoniae (strain Hungary19A-6) protein is Tyrosine recombinase XerS.